A 255-amino-acid polypeptide reads, in one-letter code: Small ribosomal subunit protein eS1 (255 aa).

A compositionally biased stretch (basic residues) spans 1–18 (MAVGKNKRLSKGKKGLKK). Positions 1 to 28 (MAVGKNKRLSKGKKGLKKRTQDPFSRKD) are disordered. At A2 the chain carries N-acetylalanine; partial. Residues 19-28 (RTQDPFSRKD) are compositionally biased toward basic and acidic residues.

Belongs to the eukaryotic ribosomal protein eS1 family. As to quaternary structure, component of the small ribosomal subunit. Mature ribosomes consist of a small (40S) and a large (60S) subunit. The 40S subunit contains about 33 different proteins and 1 molecule of RNA (18S). The 60S subunit contains about 49 different proteins and 3 molecules of RNA (25S, 5.8S and 5S).

The protein localises to the cytoplasm. This chain is Small ribosomal subunit protein eS1, found in Ajellomyces dermatitidis (strain ER-3 / ATCC MYA-2586) (Blastomyces dermatitidis).